We begin with the raw amino-acid sequence, 320 residues long: Coproporphyrin III ferrochelatase (320 aa).

The Fe(2+) site is built by H194 and E273.

Belongs to the ferrochelatase family.

It localises to the cytoplasm. It carries out the reaction Fe-coproporphyrin III + 2 H(+) = coproporphyrin III + Fe(2+). The protein operates within porphyrin-containing compound metabolism; protoheme biosynthesis. Its function is as follows. Involved in coproporphyrin-dependent heme b biosynthesis. Catalyzes the insertion of ferrous iron into coproporphyrin III to form Fe-coproporphyrin III. The protein is Coproporphyrin III ferrochelatase of Symbiobacterium thermophilum (strain DSM 24528 / JCM 14929 / IAM 14863 / T).